The sequence spans 64 residues: Ferredoxin-2 (64 aa).

The 4Fe-4S ferredoxin-type domain maps to 2-29; the sequence is RIHVDQDKCCGAGSCVLAAPDVFDQREE. The [3Fe-4S] cluster site is built by cysteine 10, cysteine 16, and cysteine 55.

It depends on [3Fe-4S] cluster as a cofactor.

Electron transport protein for the cytochrome P-450-SU2 system. The sequence is that of Ferredoxin-2 (subB) from Streptomyces griseolus.